The chain runs to 255 residues: tRNA (guanine-N(1)-)-methyltransferase (255 aa).

Residues glycine 113 and 133–138 each bind S-adenosyl-L-methionine; that span reads IGDYVL.

The protein belongs to the RNA methyltransferase TrmD family. Homodimer.

Its subcellular location is the cytoplasm. The catalysed reaction is guanosine(37) in tRNA + S-adenosyl-L-methionine = N(1)-methylguanosine(37) in tRNA + S-adenosyl-L-homocysteine + H(+). In terms of biological role, specifically methylates guanosine-37 in various tRNAs. The polypeptide is tRNA (guanine-N(1)-)-methyltransferase (Mannheimia succiniciproducens (strain KCTC 0769BP / MBEL55E)).